We begin with the raw amino-acid sequence, 239 residues long: Skn-1 dependent zygotic transcript 1 protein (239 aa).

As to expression, expressed in mesendodermal precursor cells of embryos.

Functionally, may have a role in mesendoderm development during embryogenesis. In Caenorhabditis elegans, this protein is Skn-1 dependent zygotic transcript 1 protein (sdz-1).